The primary structure comprises 160 residues: Envelope glycoprotein L (160 aa).

The signal sequence occupies residues 1-22; it reads MASHKWLLQMIVFLKTITIAYC. The interaction with gH stretch occupies residues 24–149; sequence HLQDDTPLFF…TNIPENGCVW (126 aa). Positions 28–160 constitute a gL alphaherpesvirus-type domain; that stretch reads DTPLFFGAKP…ADRLFQRVCQ (133 aa). Cystine bridges form between Cys-49–Cys-80 and Cys-147–Cys-159.

This sequence belongs to the herpesviridae glycoprotein L (gL) family. Alphaherpesvirinae gL subfamily. As to quaternary structure, interacts with glycoprotein H (gH); this interaction is necessary for the correct processing and cell surface expression of gH. The heterodimer gH/gL seems to interact with gB trimers during fusion.

It localises to the virion membrane. It is found in the host cell membrane. Its subcellular location is the host Golgi apparatus. The protein localises to the host trans-Golgi network. Its function is as follows. The heterodimer glycoprotein H-glycoprotein L is required for the fusion of viral and plasma membranes leading to virus entry into the host cell. Acts as a functional inhibitor of gH and maintains gH in an inhibited form. Upon binding to host integrins, gL dissociates from gH leading to activation of the viral fusion glycoproteins gB and gH. This is Envelope glycoprotein L from Varicella-zoster virus (strain Oka vaccine) (HHV-3).